The sequence spans 314 residues: DNA-directed RNA polymerase subunit alpha (314 aa).

Positions 1–227 (MTKFEIECVE…ELLHPLKEIN (227 aa)) are alpha N-terminal domain (alpha-NTD). The segment at 241-314 (KINQILIEEL…LPKEKTVKPN (74 aa)) is alpha C-terminal domain (alpha-CTD).

It belongs to the RNA polymerase alpha chain family. In terms of assembly, in plastids the minimal PEP RNA polymerase catalytic core is composed of four subunits: alpha, beta, beta', and beta''. When a (nuclear-encoded) sigma factor is associated with the core the holoenzyme is formed, which can initiate transcription.

Its subcellular location is the plastid. It is found in the chloroplast. The catalysed reaction is RNA(n) + a ribonucleoside 5'-triphosphate = RNA(n+1) + diphosphate. DNA-dependent RNA polymerase catalyzes the transcription of DNA into RNA using the four ribonucleoside triphosphates as substrates. The polypeptide is DNA-directed RNA polymerase subunit alpha (Rhodomonas salina (Cryptomonas salina)).